The sequence spans 352 residues: MDLTVDPNLHSLINSTTHRWIFVGGKGGVGKTTSSCSIAIQMALSQPSKQFLLISTDPAHNLSDAFGEKFGKDARKVTGMDNLSCMEIDPSAALNDMNDMAVSRANENGNGGDGLSDILQGGALADLTGSIPGIDEALSFMEVMKHIKNQENGEGDRYDTVIFDTAPTGHTLRFLQLPNTLSKLLEKFGEITGKLGPMLNSLAGAGNVDISGKLNELKENVEKIRQQFTDPDLTTFVCVCISEFLSLYETERLIQELISYDMDVNSIIVNQLLFAEYDAEHNCKRCQARWKMQKKYLDQIDELYEDFHVVKMPLCAGEIRGLNNLKKFSAFLNKEYDPVADGKVIYELEEKN.

Lys26 to Thr33 serves as a coordination point for ATP. The active site involves Asp57. ATP-binding residues include Glu243 and Asn270. Zn(2+) is bound by residues Cys283 and Cys286.

Belongs to the arsA ATPase family. As to quaternary structure, homodimer. Component of the Golgi to ER traffic (GET) complex, which is composed of GET1, GET2 and GET3. Within the complex, GET1 and GET2 form a heterotetramer which is stabilized by phosphatidylinositol binding and which binds to the GET3 homodimer. Interacts with the chloride channel protein GEF1.

It is found in the cytoplasm. The protein localises to the endoplasmic reticulum. It localises to the golgi apparatus. Functionally, ATPase required for the post-translational delivery of tail-anchored (TA) proteins to the endoplasmic reticulum. Recognizes and selectively binds the transmembrane domain of TA proteins in the cytosol. This complex then targets to the endoplasmic reticulum by membrane-bound receptors GET1 and GET2, where the tail-anchored protein is released for insertion. This process is regulated by ATP binding and hydrolysis. ATP binding drives the homodimer towards the closed dimer state, facilitating recognition of newly synthesized TA membrane proteins. ATP hydrolysis is required for insertion. Subsequently, the homodimer reverts towards the open dimer state, lowering its affinity for the GET1-GET2 receptor, and returning it to the cytosol to initiate a new round of targeting. Cooperates with the HDEL receptor ERD2 to mediate the ATP-dependent retrieval of resident ER proteins that contain a C-terminal H-D-E-L retention signal from the Golgi to the ER. Involved in low-level resistance to the oxyanions arsenite and arsenate, and in heat tolerance. The protein is ATPase GET3 of Vanderwaltozyma polyspora (strain ATCC 22028 / DSM 70294 / BCRC 21397 / CBS 2163 / NBRC 10782 / NRRL Y-8283 / UCD 57-17) (Kluyveromyces polysporus).